We begin with the raw amino-acid sequence, 525 residues long: Vesicular inhibitory amino acid transporter (525 aa).

Residues Met-1–Met-132 are Cytoplasmic-facing. Residues Phe-133–Ile-153 traverse the membrane as a helical segment. Over Phe-154–Arg-204 the chain is Lumenal, vesicle. Tyr-186 bears the 3'-nitrotyrosine mark. Residues Val-205–Ser-225 form a helical membrane-spanning segment. Topologically, residues Gly-226–Lys-265 are cytoplasmic. A helical membrane pass occupies residues Phe-266–Leu-286. The Lumenal, vesicle segment spans residues Ser-287–Lys-305. The chain crosses the membrane as a helical span at residues Phe-306–Leu-326. Residues Glu-327–Asn-341 lie on the Cytoplasmic side of the membrane. Residues Trp-342–Trp-362 form a helical membrane-spanning segment. The Lumenal, vesicle segment spans residues Ala-363–Asn-383. The chain crosses the membrane as a helical span at residues Ile-384–Val-404. Over Leu-405–Ala-438 the chain is Cytoplasmic. Residues Leu-439 to Leu-459 form a helical membrane-spanning segment. Over Thr-460 to Gly-461 the chain is Lumenal, vesicle. Residues Ser-462–Trp-482 traverse the membrane as a helical segment. Residues Arg-483–Gln-489 lie on the Cytoplasmic side of the membrane. The helical transmembrane segment at Val-490–His-510 threads the bilayer. The Lumenal, vesicle portion of the chain corresponds to Ser-511–Asp-525.

The protein belongs to the amino acid/polyamine transporter 2 family. As to expression, brain. Expressed at high levels within the neocortex, hippocampus, cerebellum, striatum, septal nuclei and the reticular nucleus of the thalamus. Also expressed in islets where it is more abundant in the peripheral/mantle region. Highly expressed in the nerve endings of GABA neurons in the brain and spinal cord but also in glycinergic nerve endings. Expressed in glycine-, GABA- or GABA- and glycine-containing boutons.

It localises to the cytoplasmic vesicle. It is found in the secretory vesicle. The protein resides in the synaptic vesicle membrane. Its subcellular location is the presynapse. The catalysed reaction is beta-alanine(out) + n H(+)(in) = beta-alanine(in) + n H(+)(out). It carries out the reaction 4-aminobutanoate(out) + n H(+)(in) = 4-aminobutanoate(in) + n H(+)(out). It catalyses the reaction glycine(out) + n H(+)(in) = glycine(in) + n H(+)(out). In terms of biological role, antiporter that exchanges vesicular protons for cytosolic 4-aminobutanoate or to a lesser extend glycine, thus allowing their secretion from nerve terminals. The transport is equally dependent on the chemical and electrical components of the proton gradient. May also transport beta-alanine. Acidification of GABAergic synaptic vesicles is a prerequisite for 4-aminobutanoate uptake. The protein is Vesicular inhibitory amino acid transporter of Rattus norvegicus (Rat).